A 145-amino-acid chain; its full sequence is Large ribosomal subunit protein uL13 (145 aa).

Belongs to the universal ribosomal protein uL13 family. Part of the 50S ribosomal subunit.

Functionally, this protein is one of the early assembly proteins of the 50S ribosomal subunit, although it is not seen to bind rRNA by itself. It is important during the early stages of 50S assembly. The sequence is that of Large ribosomal subunit protein uL13 from Bacillus thuringiensis (strain Al Hakam).